The primary structure comprises 206 residues: Pyridoxal 5'-phosphate synthase subunit PdxT (206 aa).

An L-glutamine-binding site is contributed by 59 to 61 (GES). The Nucleophile role is filled by Cys-91. Residues Arg-123 and 151–152 (IR) each bind L-glutamine. Residues His-187 and Glu-189 each act as charge relay system in the active site.

It belongs to the glutaminase PdxT/SNO family. In the presence of PdxS, forms a dodecamer of heterodimers. Only shows activity in the heterodimer.

The enzyme catalyses aldehydo-D-ribose 5-phosphate + D-glyceraldehyde 3-phosphate + L-glutamine = pyridoxal 5'-phosphate + L-glutamate + phosphate + 3 H2O + H(+). The catalysed reaction is L-glutamine + H2O = L-glutamate + NH4(+). The protein operates within cofactor biosynthesis; pyridoxal 5'-phosphate biosynthesis. Its function is as follows. Catalyzes the hydrolysis of glutamine to glutamate and ammonia as part of the biosynthesis of pyridoxal 5'-phosphate. The resulting ammonia molecule is channeled to the active site of PdxS. The chain is Pyridoxal 5'-phosphate synthase subunit PdxT from Mycobacterium sp. (strain JLS).